A 242-amino-acid chain; its full sequence is DNA repair protein RecO (242 aa).

Belongs to the RecO family. As to quaternary structure, monomer.

Involved in DNA repair and RecF pathway recombination. The protein is DNA repair protein RecO of Salmonella gallinarum (strain 287/91 / NCTC 13346).